A 404-amino-acid chain; its full sequence is MKLPIYLDYSATTPVDPRVAEKMIECLTNEGNFGNPASRSHAFGWKAEEAVENARRQVAELVNADPREIVWTSGATESDNLAIKGVAHFYASKGKHIVTTKIEHKAVLDTTRQLEREGFEVTYIEPGDDGIVTPAMVEAALREDTILVSVMHVNNEIGTINDITAIGELTRARGILFHVDAAQSTGKVEIDLEKIKVDLMSFSAHKTYGPKGVGALYVRRKPRVRLEAQMHGGGHERGMRSGTLATHQLVGMGEAFRIAKQEMAQENERIRALRDRFYKQVEHLEELYVNGSMTARVPHNLNLSFNYVEGESLIMALKDLAVSSGSACTSASLEPSYVLRALGRNDELAHSSIRFTFGRFTTEEEIDYAAQKVCEAVTKLRELSPLWDMFKDGVDISKVEWQAH.

Residues 75-76, Asn-155, Gln-183, and 203-205 contribute to the pyridoxal 5'-phosphate site; these read AT and SAH. Lys-206 carries the N6-(pyridoxal phosphate)lysine modification. Position 243 (Thr-243) interacts with pyridoxal 5'-phosphate. Residue Cys-328 is the Cysteine persulfide intermediate of the active site. Cys-328 serves as a coordination point for [2Fe-2S] cluster.

The protein belongs to the class-V pyridoxal-phosphate-dependent aminotransferase family. NifS/IscS subfamily. As to quaternary structure, homodimer. Forms a heterotetramer with IscU, interacts with other sulfur acceptors. Pyridoxal 5'-phosphate is required as a cofactor.

It localises to the cytoplasm. It catalyses the reaction (sulfur carrier)-H + L-cysteine = (sulfur carrier)-SH + L-alanine. It functions in the pathway cofactor biosynthesis; iron-sulfur cluster biosynthesis. Its function is as follows. Master enzyme that delivers sulfur to a number of partners involved in Fe-S cluster assembly, tRNA modification or cofactor biosynthesis. Catalyzes the removal of elemental sulfur atoms from cysteine to produce alanine. Functions as a sulfur delivery protein for Fe-S cluster synthesis onto IscU, an Fe-S scaffold assembly protein, as well as other S acceptor proteins. In Stutzerimonas stutzeri (strain A1501) (Pseudomonas stutzeri), this protein is Cysteine desulfurase IscS.